The sequence spans 405 residues: Cytochrome b (405 aa).

The chain crosses the membrane as a helical span at residues 44–64 (FGSLAGIAMIIMIATGIFLAM). Heme b-binding residues include histidine 94 and histidine 108. The next 8 membrane-spanning stretches (helical) occupy residues 97–117 (GASMFFIVVYVHMFRGLYYGS), 124–144 (VLWWLGLVILLLMMATAFMGY), 163–183 (FSAIPVVGDDIVTLLWGGFSV), 191–211 (FFSLHYLFPMLLFAVVFLHMW), 245–265 (FGLGIFLMVFCFFVFFAPNFF), 303–323 (LGGVLAMFGAILILFVLPWLD), 338–358 (GFFWVFLADCLLLGYLGAMPA), and 368–388 (LATIYYFLHFLVITPLVGWFE). Histidine 195 and histidine 209 together coordinate heme b.

This sequence belongs to the cytochrome b family. The main subunits of complex b-c1 are: cytochrome b, cytochrome c1 and the Rieske protein. Heme b is required as a cofactor.

It localises to the cell membrane. Component of the ubiquinol-cytochrome c reductase complex (complex III or cytochrome b-c1 complex), which is a respiratory chain that generates an electrochemical potential coupled to ATP synthesis. This Rhodospirillum rubrum protein is Cytochrome b (petB).